Consider the following 269-residue polypeptide: Propanediol uptake facilitator PduF (269 aa).

Helical transmembrane passes span 10–30 (IAEF…LSAL) and 42–62 (ICII…GISG). The NPA 1 motif lies at 66–68 (NPA). The next 3 helical transmembrane spans lie at 69–89 (ITIA…PYTV), 143–163 (VWQA…MIMA), and 179–199 (LLIG…TGFA). The NPA 2 motif lies at 201–203 (NPA). Residues 228 to 248 (IPYFIVPIVAPIIGACAGAAI) form a helical membrane-spanning segment.

It belongs to the MIP/aquaporin (TC 1.A.8) family.

The protein resides in the cell inner membrane. Functionally, probably facilitates diffusion of 1,2-propanediol (1,2-PD) into the cell. In Citrobacter freundii, this protein is Propanediol uptake facilitator PduF.